We begin with the raw amino-acid sequence, 427 residues long: Gustatory receptor for sugar taste 43a (427 aa).

The Cytoplasmic portion of the chain corresponds to 1–37 (MEISQPSIGIFYISKVLALAPYATVRNSKGRVEIGRS). Residues 38–63 (WLFTVYSATLTVVMVFLTYRGLLFDA) traverse the membrane as a helical segment. The Extracellular segment spans residues 64 to 75 (NSEIPVRMKSAT). Beta-D-fructose is bound by residues Arg70 and Asp83. The chain crosses the membrane as a helical span at residues 76 to 96 (SKVVTALDVSVVVMAIVSGVY). The Cytoplasmic segment spans residues 97-135 (CGLFSLNDTLELNDRLNKIDNTLNAYNNFRRDRWRALGM). A helical membrane pass occupies residues 136-158 (AAVSLLAISILVGLDVGTWMRIA). The Extracellular segment spans residues 159–168 (QDMNIAQSDT). The helical transmembrane segment at 169–193 (ELNVHWYIPFYSLYFILTGLQVNIA) threads the bilayer. Tyr182 contacts beta-D-fructose. At 194 to 293 (NTAYGLGRRF…CVHLLSNSFG (100 aa)) the chain is on the cytoplasmic side. A helical transmembrane segment spans residues 294-316 (IAVLFILVSCLLHLVATAYFLFL). Thr310 contributes to the beta-D-fructose binding site. Over 317–324 (ELLSKRDN) the chain is Extracellular. The chain crosses the membrane as a helical span at residues 325-346 (GYLWVQMLWICFHFLRLLMVVE). Position 337 (His337) interacts with beta-D-fructose. The Cytoplasmic portion of the chain corresponds to 347–402 (PCHLAARESRKTIQIVCEIERKVHEPILAEAVKKFWQQLLVVDADFSACGLCRVNR). The chain crosses the membrane as a helical span at residues 403 to 423 (TILTSFASAIATYLVILIQFQ). Gln421 lines the Ca(2+) pocket. Topologically, residues 424-427 (RTNG) are extracellular.

Belongs to the insect chemoreceptor superfamily. Gustatory receptor (GR) family. Gr21a subfamily. In terms of assembly, homotetramer. As to expression, expressed in the adult labellar chemosensory neurons and in the adult head, abdomen, leg and wing. In larvae, is expressed in taste organs, as well as the brain and the gastrointestinal system.

It localises to the cell membrane. Functionally, gustatory receptor which mediates acceptance or avoidance behavior, depending on its substrates. Gr43a is the main sugar receptor in larvae. Functions as a narrowly tuned fructose receptor in taste neurons but also as a fructose receptor in the brain. Necessary and sufficient to sense hemolymph fructose and promote feeding in hungry flies but suppress feeding in satiated flies. The protein is Gustatory receptor for sugar taste 43a (Gr43a) of Drosophila melanogaster (Fruit fly).